We begin with the raw amino-acid sequence, 282 residues long: Ribosome biogenesis GTPase A (282 aa).

The region spanning 14 to 178 (RREVTEKLKL…LLDTPGILWP (165 aa)) is the CP-type G domain. GTP is bound by residues 58–61 (NKAD), 86–87 (NS), 130–135 (NVGKST), and glycine 174.

The protein belongs to the TRAFAC class YlqF/YawG GTPase family. MTG1 subfamily. As to quaternary structure, interacts with ctc. Interacts with the immature 50S ribosome subunit. 2 molecules of rbgA bind to one 50S subunit.

Its subcellular location is the cytoplasm. In terms of biological role, essential protein that is required for a late step of 50S ribosomal subunit assembly. Has GTPase activity that is stimulated by interaction with the immature 50S ribosome subunit. Binds to the 23S rRNA. Required for the association of ribosomal proteins rplP and rpmA with the large subunit. In Bacillus pumilus (strain SAFR-032), this protein is Ribosome biogenesis GTPase A.